Reading from the N-terminus, the 237-residue chain is Riboflavin kinase (237 aa).

The disordered stretch occupies residues 1–23 (MSLPNPDNRPLLIGPPTGPEAPF). Residues T46 and N48 each contribute to the Mg(2+) site. A disordered region spans residues 82-126 (VLYQKPPTSEPVMMDPVQQQQQQQQQQRNQQQQQEGGVGSAQQEK). A compositionally biased stretch (low complexity) spans 99–115 (QQQQQQQQQQRNQQQQQ). E158 functions as the Nucleophile in the catalytic mechanism.

Belongs to the flavokinase family. Zn(2+) is required as a cofactor. The cofactor is Mg(2+).

The catalysed reaction is riboflavin + ATP = FMN + ADP + H(+). The protein operates within cofactor biosynthesis; FMN biosynthesis; FMN from riboflavin (ATP route): step 1/1. Its function is as follows. Catalyzes the phosphorylation of riboflavin (vitamin B2) to form flavin mononucleotide (FMN) coenzyme. The chain is Riboflavin kinase (fmn1) from Neurospora crassa (strain ATCC 24698 / 74-OR23-1A / CBS 708.71 / DSM 1257 / FGSC 987).